The following is a 256-amino-acid chain: Cell division protein FtsQ (256 aa).

The Cytoplasmic segment spans residues 1–23; that stretch reads MIKAVKMNTSFDKEKVRKHLPGA. Residues 24–44 traverse the membrane as a helical segment; that stretch reads IFLSLVVITSLWLVISTISWM. At 45 to 256 the chain is on the periplasmic side; sequence TDEDRLPLSH…SDDVENKEEN (212 aa). The 71-residue stretch at 50-120 folds into the POTRA domain; the sequence is LPLSHMIIQG…ETIKVFVVEH (71 aa).

Belongs to the FtsQ/DivIB family. FtsQ subfamily. As to quaternary structure, part of a complex composed of FtsB, FtsL and FtsQ.

The protein localises to the cell inner membrane. Its function is as follows. Essential cell division protein. May link together the upstream cell division proteins, which are predominantly cytoplasmic, with the downstream cell division proteins, which are predominantly periplasmic. May control correct divisome assembly. The sequence is that of Cell division protein FtsQ from Aliivibrio fischeri (strain ATCC 700601 / ES114) (Vibrio fischeri).